We begin with the raw amino-acid sequence, 1054 residues long: Isoleucine--tRNA ligase (1054 aa).

Positions 58–68 match the 'HIGH' region motif; it reads PFANGLPHYGH. The short motif at 627-631 is the 'KMSKS' region element; the sequence is KMSKS. Residue Lys630 participates in ATP binding.

The protein belongs to the class-I aminoacyl-tRNA synthetase family. IleS type 2 subfamily. Monomer. It depends on Zn(2+) as a cofactor.

It localises to the cytoplasm. The catalysed reaction is tRNA(Ile) + L-isoleucine + ATP = L-isoleucyl-tRNA(Ile) + AMP + diphosphate. Functionally, catalyzes the attachment of isoleucine to tRNA(Ile). As IleRS can inadvertently accommodate and process structurally similar amino acids such as valine, to avoid such errors it has two additional distinct tRNA(Ile)-dependent editing activities. One activity is designated as 'pretransfer' editing and involves the hydrolysis of activated Val-AMP. The other activity is designated 'posttransfer' editing and involves deacylation of mischarged Val-tRNA(Ile). This chain is Isoleucine--tRNA ligase, found in Corynebacterium efficiens (strain DSM 44549 / YS-314 / AJ 12310 / JCM 11189 / NBRC 100395).